A 290-amino-acid chain; its full sequence is Short chain dehydrogenase andI (290 aa).

7 residues coordinate NADP(+): Ile35, Asn120, Arg154, Tyr186, Lys190, Val219, and Thr221. Tyr186 functions as the Proton acceptor in the catalytic mechanism. The active-site Lowers pKa of active site Tyr is the Lys190.

It belongs to the short-chain dehydrogenases/reductases (SDR) family.

It participates in secondary metabolite biosynthesis; terpenoid biosynthesis. Functionally, short chain dehydrogenase; part of the gene cluster that mediates the biosynthesis of anditomin, a fungal meroterpenoid. The first step of the pathway is the synthesis of 3,5-dimethylorsellinic acid (DMOA) by the polyketide synthase andM. DMOA is then converted to the phthalide compound 5,7-dihydroxy-4,6-dimethylphthalide (DHDMP) by the cytochrome P450 monooxygenase andK, which is further prenylated by the prenyltransferase andD to yield farnesyl-DHDMP. Further epoxidation by the FAD-dependent monooxygenase andE leads to epoxyfarnesyl-DHDMP. The next step involves the terpene cyclase andB that converts epoxyfarnesyl-DHDMP into preandiloid A through opening of the epoxide ring followed by the cyclization of the farnesyl moiety. Preandiloid A is in turn oxidized at the C-3 hydroxyl group to yield preandiloid B by the dehydrogenase andC. The dioxygenase andA is solely responsible for the dehydrogenation of preandiloid B leading to the enone preandiloid C, as well as for the intriguing structural rearrangement to generate the bicyclo[2.2.2]octane core, transforming preandiloid C into andiconin. FAD-binding monooxygenase andJ then produces andilesin D which is reduced by dehydrogenase andI to yield andilesin A. Action of acetyltransferase andG followed by a spontaneous acetate elimination leads then to andilesin B, which is in turn substrate of the short chain dehydrogenase andH to yield andilesin C. Finally, the dioxygenase andF catalyzes the transformation of andilesin C to anditomin. The protein is Short chain dehydrogenase andI of Emericella variicolor (Aspergillus stellatus).